A 157-amino-acid polypeptide reads, in one-letter code: Endoribonuclease YbeY (157 aa).

Residues His-114, His-118, and His-124 each coordinate Zn(2+).

This sequence belongs to the endoribonuclease YbeY family. Zn(2+) serves as cofactor.

The protein localises to the cytoplasm. Its function is as follows. Single strand-specific metallo-endoribonuclease involved in late-stage 70S ribosome quality control and in maturation of the 3' terminus of the 16S rRNA. This is Endoribonuclease YbeY from Caulobacter vibrioides (strain ATCC 19089 / CIP 103742 / CB 15) (Caulobacter crescentus).